A 219-amino-acid chain; its full sequence is Large ribosomal subunit protein bL25 (219 aa).

Residues 188 to 219 form a disordered region; that stretch reads TVAAPADTAVQPESSSTKGKKDEDGALAKDKK. Residues 206 to 219 are compositionally biased toward basic and acidic residues; it reads GKKDEDGALAKDKK.

Belongs to the bacterial ribosomal protein bL25 family. CTC subfamily. In terms of assembly, part of the 50S ribosomal subunit; part of the 5S rRNA/L5/L18/L25 subcomplex. Contacts the 5S rRNA. Binds to the 5S rRNA independently of L5 and L18.

Functionally, this is one of the proteins that binds to the 5S RNA in the ribosome where it forms part of the central protuberance. This chain is Large ribosomal subunit protein bL25, found in Elusimicrobium minutum (strain Pei191).